A 233-amino-acid polypeptide reads, in one-letter code: Adenosine 5'-phosphosulfate reductase (233 aa).

Positions 120, 121, 203, and 206 each coordinate [4Fe-4S] cluster. Cys229 acts as the Nucleophile; cysteine thiosulfonate intermediate in catalysis.

Belongs to the PAPS reductase family. CysH subfamily. Requires [4Fe-4S] cluster as cofactor.

The protein localises to the cytoplasm. The enzyme catalyses [thioredoxin]-disulfide + sulfite + AMP + 2 H(+) = adenosine 5'-phosphosulfate + [thioredoxin]-dithiol. It participates in sulfur metabolism; hydrogen sulfide biosynthesis; sulfite from sulfate. Functionally, catalyzes the formation of sulfite from adenosine 5'-phosphosulfate (APS) using thioredoxin as an electron donor. This is Adenosine 5'-phosphosulfate reductase from Bacillus pumilus (strain SAFR-032).